A 126-amino-acid polypeptide reads, in one-letter code: Glycine cleavage system H protein (126 aa).

The Lipoyl-binding domain occupies 22 to 104 (TVTIGITEYA…YEKAWMVKVK (83 aa)). Residue K63 is modified to N6-lipoyllysine.

The protein belongs to the GcvH family. In terms of assembly, the glycine cleavage system is composed of four proteins: P, T, L and H. (R)-lipoate serves as cofactor.

In terms of biological role, the glycine cleavage system catalyzes the degradation of glycine. The H protein shuttles the methylamine group of glycine from the P protein to the T protein. Is also involved in protein lipoylation via its role as an octanoyl/lipoyl carrier protein intermediate. The protein is Glycine cleavage system H protein of Staphylococcus carnosus (strain TM300).